A 121-amino-acid chain; its full sequence is Large ribosomal subunit protein uL14 (121 aa).

Belongs to the universal ribosomal protein uL14 family. In terms of assembly, part of the 50S ribosomal subunit. Forms a cluster with proteins L3 and L19. In the 70S ribosome, L14 and L19 interact and together make contacts with the 16S rRNA in bridges B5 and B8.

Its function is as follows. Binds to 23S rRNA. Forms part of two intersubunit bridges in the 70S ribosome. The polypeptide is Large ribosomal subunit protein uL14 (Phocaeicola vulgatus (strain ATCC 8482 / DSM 1447 / JCM 5826 / CCUG 4940 / NBRC 14291 / NCTC 11154) (Bacteroides vulgatus)).